We begin with the raw amino-acid sequence, 667 residues long: Leucine zipper putative tumor suppressor 2 (667 aa).

Residues Met-1–Ala-25 show a composition bias toward low complexity. 3 disordered regions span residues Met-1–Gly-132, Pro-150–Leu-325, and Gln-516–Pro-541. Residues Met-1–Lys-333 form a required for centrosomal localization region. Positions Pro-172 to Gln-181 are enriched in polar residues. Residues Ala-187 to Ala-198 are compositionally biased toward low complexity. Polar residues predominate over residues Pro-212–Thr-232. A compositionally biased stretch (low complexity) spans Ser-241–Gly-282. Ser-248 bears the Phosphoserine mark. Over residues Ser-283 to Gly-294 the composition is skewed to gly residues. Ser-295 bears the Phosphoserine mark. The span at Ser-310–Ser-321 shows a compositional bias: pro residues. A coiled-coil region spans residues Val-329–Asp-647. The tract at residues Ser-445–Ile-667 is sufficient for interaction with CTNNB1. Residues Ile-448 to Ile-667 are sufficient for interaction with KATNB1 and for inhibition of katanin-mediated microtubule severing. Residues Gln-516 to Gly-526 show a composition bias toward basic and acidic residues. Ser-568 is modified (phosphoserine). The short motif at Leu-629 to Leu-638 is the Nuclear export signal element.

It belongs to the LZTS2 family. In terms of assembly, interacts with KATNB1. Also interacts with CTNNB1, gamma-tubulin and KIF23.

It is found in the cytoplasm. The protein localises to the cytoskeleton. It localises to the microtubule organizing center. Its subcellular location is the centrosome. Negative regulator of katanin-mediated microtubule severing and release from the centrosome. Required for central spindle formation and the completion of cytokinesis. May negatively regulate axonal outgrowth by preventing the formation of microtubule bundles that are necessary for transport within the elongating axon. Negative regulator of the Wnt signaling pathway. Represses beta-catenin-mediated transcriptional activation by promoting the nuclear exclusion of beta-catenin. This chain is Leucine zipper putative tumor suppressor 2, found in Bos taurus (Bovine).